The primary structure comprises 1503 residues: ATP-binding cassette sub-family C member 6 (1503 aa).

Over M1–F31 the chain is Extracellular. N-linked (GlcNAc...) asparagine glycosylation occurs at N15. The chain crosses the membrane as a helical span at residues L32–L52. Topologically, residues L53–K72 are cytoplasmic. A helical transmembrane segment spans residues M73–K93. The Extracellular segment spans residues I94 to T98. The helical transmembrane segment at P99–V119 threads the bilayer. The Cytoplasmic segment spans residues F120 to Q131. Residues S132–T149 traverse the membrane as a helical segment. The Extracellular portion of the chain corresponds to N150–H167. The chain crosses the membrane as a helical span at residues L168–D188. Residues Q189 to A302 are Cytoplasmic-facing. Residues I303–V323 form a helical membrane-spanning segment. In terms of domain architecture, ABC transmembrane type-1 1 spans F311–Q593. Topologically, residues F324–G349 are extracellular. Residues Y350 to N370 form a helical membrane-spanning segment. At M371–Y426 the chain is on the cytoplasmic side. A helical membrane pass occupies residues L427–L447. Residues L448–P450 lie on the Extracellular side of the membrane. The chain crosses the membrane as a helical span at residues S451–K471. Over K472–S533 the chain is Cytoplasmic. A helical membrane pass occupies residues V534–H554. Over T555–N575 the chain is Extracellular. The chain crosses the membrane as a helical span at residues I576 to V596. At S597–L939 the chain is on the cytoplasmic side. The 225-residue stretch at I629–Q853 folds into the ABC transporter 1 domain. G663–S670 lines the ATP pocket. The disordered stretch occupies residues A854–P919. The span at R881–T901 shows a compositional bias: basic and acidic residues. A helical membrane pass occupies residues R940–A960. Positions C947–N1228 constitute an ABC transmembrane type-1 2 domain. Over S961 to L997 the chain is Extracellular. Residues Q998–R1018 form a helical membrane-spanning segment. Residues L1019–D1061 are Cytoplasmic-facing. Residues K1062–V1082 form a helical membrane-spanning segment. Position 1083 (A1083) is a topological domain, extracellular. A helical membrane pass occupies residues T1084–L1104. Topologically, residues Y1105–V1175 are cytoplasmic. Residues E1176–H1196 traverse the membrane as a helical segment. The Extracellular segment spans residues L1197–S1198. Residues A1199 to V1219 form a helical membrane-spanning segment. The Cytoplasmic portion of the chain corresponds to V1220–V1503. The 235-residue stretch at I1265–E1499 folds into the ABC transporter 2 domain. S1286 carries the post-translational modification Phosphoserine. G1299–S1306 lines the ATP pocket.

This sequence belongs to the ABC transporter superfamily. ABCC family. Conjugate transporter (TC 3.A.1.208) subfamily. Mg(2+) serves as cofactor. Glycosylated. Expressed in kidney and liver. Very low expression in other tissues. In testis, localized to peritubular myoid cells, Leydig cells, along the basal membrane of Sertoli cells and moderately in the adluminal compartment of the seminiferous tubules.

It localises to the basal cell membrane. The protein localises to the basolateral cell membrane. The protein resides in the endoplasmic reticulum membrane. It catalyses the reaction an S-substituted glutathione(in) + ATP + H2O = an S-substituted glutathione(out) + ADP + phosphate + H(+). The enzyme catalyses leukotriene C4(in) + ATP + H2O = leukotriene C4(out) + ADP + phosphate + H(+). With respect to regulation, LTC4 transport is completely inhibited by 1 mM orthovanadate. Its function is as follows. ATP-dependent transporter of the ATP-binding cassette (ABC) family that actively extrudes physiological compounds, and xenobiotics from cells. Mediates ATP-dependent transport of glutathione conjugates such as leukotriene-c4 (LTC4) and N-ethylmaleimide S-glutathione (NEM-GS) (in vitro), and an anionic cyclopentapeptide endothelin antagonist, BQ-123. May contribute to regulate the transport of organic compounds in testes across the blood-testis-barrier. Does not appear to actively transport drugs outside the cell. Confers low levels of cellular resistance to etoposide, teniposide, anthracyclines and cisplatin. In terms of biological role, mediates the release of nucleoside triphosphates, predominantly ATP, into the circulation, where it is rapidly converted into AMP and the mineralization inhibitor inorganic pyrophosphate (PPi) by the ecto-enzyme ectonucleotide pyrophosphatase phosphodiesterase 1 (ENPP1), therefore playing a role in PPi homeostasis. Functionally, inhibits TNF-alpha-mediated apoptosis through blocking one or more caspases. This is ATP-binding cassette sub-family C member 6 (ABCC6) from Homo sapiens (Human).